Here is a 580-residue protein sequence, read N- to C-terminus: Rap guanine nucleotide exchange factor 5 (580 aa).

The N-terminal Ras-GEF domain maps to 68–201 (DRYVVVSGTP…ELKEFQKILG (134 aa)). One can recognise a Ras-GEF domain in the interval 345-579 (NTWDLALELM…FELSHRIEPR (235 aa)).

Widely expressed with highest levels in brain.

It is found in the nucleus. Guanine nucleotide exchange factor (GEF) for RAP1A, RAP2A and MRAS/M-Ras-GTP. Its association with MRAS inhibits Rap1 activation. The protein is Rap guanine nucleotide exchange factor 5 (RAPGEF5) of Homo sapiens (Human).